A 483-amino-acid chain; its full sequence is Glycogen synthase (483 aa).

Lysine 15 contacts ADP-alpha-D-glucose.

The protein belongs to the glycosyltransferase 1 family. Bacterial/plant glycogen synthase subfamily.

The catalysed reaction is [(1-&gt;4)-alpha-D-glucosyl](n) + ADP-alpha-D-glucose = [(1-&gt;4)-alpha-D-glucosyl](n+1) + ADP + H(+). It participates in glycan biosynthesis; glycogen biosynthesis. In terms of biological role, synthesizes alpha-1,4-glucan chains using ADP-glucose. This is Glycogen synthase from Thioalkalivibrio sulfidiphilus (strain HL-EbGR7).